Consider the following 230-residue polypeptide: Ropporin-1-like protein (230 aa).

The RIIa domain maps to 17 to 54 (PELPDILKQFTKAAIRTQPADVLQWSAGYFSALSRGDP).

This sequence belongs to the ropporin family. In terms of assembly, component of the axonemal radial spoke complex 1 (RS1), at least composed of spoke head proteins RSPH1, RSPH3, RSPH9 and the cilia-specific component RSPH4A or sperm-specific component RSPH6A, spoke stalk proteins RSPH14, DNAJB13, DYDC1, ROPN1L and NME5, and the anchor protein IQUB. May interact with AKAP3. Interacts with FSCB; the interaction increases upon spermatozoa capacitation conditions. Interacts with CFAP61. Sumoylated, sumoylation decreases upon spermatozoa capacitation conditions.

The protein resides in the cell projection. It localises to the cilium. Its subcellular location is the flagellum. In terms of biological role, functions as part of axonemal radial spoke complexes that play an important part in the motility of sperm and cilia. Important for male fertility. With ROPN1, involved in fibrous sheath integrity and sperm motility, plays a role in PKA-dependent signaling processes required for spermatozoa capacitation. The chain is Ropporin-1-like protein (ROPN1L) from Macaca fascicularis (Crab-eating macaque).